Here is a 313-residue protein sequence, read N- to C-terminus: Pseudouridine kinase (313 aa).

The protein belongs to the carbohydrate kinase PfkB family.

The catalysed reaction is pseudouridine + ATP = psi-UMP + ADP + H(+). In terms of biological role, catalyzes the phosphorylation of pseudouridine to pseudouridine 5'-phosphate (PsiMP). In Escherichia coli (strain K12), this protein is Pseudouridine kinase (psuK).